We begin with the raw amino-acid sequence, 198 residues long: Guanine nucleotide-binding protein subunit alpha-11 (198 aa).

The tract at residues 1-11 (LLGTGESGKST) is G1 motif. Positions 1-198 (LLGTGESGKS…LSEYDHVLVE (198 aa)) constitute a G-alpha domain. Residues 3-10 (GTGESGKS) and 137-140 (LRVR) contribute to the GTP site. Position 10 (S10) interacts with Mg(2+). The tract at residues 135–143 (DVLRVRVPT) is G2 motif. T143 serves as a coordination point for Mg(2+). The segment at 158 to 167 (FRMVDVGGQR) is G3 motif.

The protein belongs to the G-alpha family. G(q) subfamily. As to quaternary structure, g proteins are composed of 3 units; alpha, beta and gamma. The alpha chain contains the guanine nucleotide binding site. Interacts with RGS22. Interacts with NTSR1.

Its subcellular location is the cell membrane. The protein localises to the cytoplasm. The enzyme catalyses GTP + H2O = GDP + phosphate + H(+). In terms of biological role, guanine nucleotide-binding proteins (G proteins) function as transducers downstream of G protein-coupled receptors (GPCRs) in numerous signaling cascades. The alpha chain contains the guanine nucleotide binding site and alternates between an active, GTP-bound state and an inactive, GDP-bound state. Signaling by an activated GPCR promotes GDP release and GTP binding. The alpha subunit has a low GTPase activity that converts bound GTP to GDP, thereby terminating the signal. Both GDP release and GTP hydrolysis are modulated by numerous regulatory proteins. Signaling is mediated via phospholipase C-beta-dependent inositol lipid hydrolysis for signal propagation: activates phospholipase C-beta: following GPCR activation, GNA11 activates PLC-beta (PLCB1, PLCB2, PLCB3 or PLCB4), leading to production of diacylglycerol (DAG) and inositol 1,4,5-trisphosphate (IP3). Transduces FFAR4 signaling in response to long-chain fatty acids (LCFAs). Together with GNAQ, required for heart development. In the respiratory epithelium, transmits OXGR1-dependent signals that lead to downstream intracellular Ca(2+) release and mucocilliary clearance of airborne pathogens. The chain is Guanine nucleotide-binding protein subunit alpha-11 (GNA11) from Canis lupus familiaris (Dog).